The following is a 218-amino-acid chain: Small ribosomal subunit protein uS3c (218 aa).

Residues 39-120 (IRNFMNKELL…IITCKVVGVT (82 aa)) form the KH type-2 domain.

This sequence belongs to the universal ribosomal protein uS3 family. Part of the 30S ribosomal subunit.

The protein resides in the plastid. It localises to the chloroplast. This Euglena gracilis protein is Small ribosomal subunit protein uS3c (rps3).